Reading from the N-terminus, the 215-residue chain is Cytochrome b6 (215 aa).

A helical transmembrane segment spans residues 32-52; it reads IFYCLGGITLTCFLVQVATGF. Residue Cys35 participates in heme c binding. Heme b is bound by residues His86 and His100. 3 consecutive transmembrane segments (helical) span residues 90 to 110, 116 to 136, and 186 to 206; these read ASMM…TGGF, LTWV…VTGY, and LHTF…FLMI. Residues His187 and His202 each coordinate heme b.

This sequence belongs to the cytochrome b family. PetB subfamily. The 4 large subunits of the cytochrome b6-f complex are cytochrome b6, subunit IV (17 kDa polypeptide, PetD), cytochrome f and the Rieske protein, while the 4 small subunits are PetG, PetL, PetM and PetN. The complex functions as a dimer. Heme b serves as cofactor. The cofactor is heme c.

The protein resides in the plastid. It is found in the chloroplast thylakoid membrane. Functionally, component of the cytochrome b6-f complex, which mediates electron transfer between photosystem II (PSII) and photosystem I (PSI), cyclic electron flow around PSI, and state transitions. This is Cytochrome b6 from Hordeum vulgare (Barley).